Here is a 236-residue protein sequence, read N- to C-terminus: Glucosamine-6-phosphate deaminase (236 aa).

Residue D67 is the Proton acceptor; for enolization step of the active site. N136 functions as the For ring-opening step in the catalytic mechanism. H138 acts as the Proton acceptor; for ring-opening step in catalysis. The active-site For ring-opening step is the E143.

Belongs to the glucosamine/galactosamine-6-phosphate isomerase family. NagB subfamily.

The enzyme catalyses alpha-D-glucosamine 6-phosphate + H2O = beta-D-fructose 6-phosphate + NH4(+). It functions in the pathway amino-sugar metabolism; N-acetylneuraminate degradation; D-fructose 6-phosphate from N-acetylneuraminate: step 5/5. Functionally, catalyzes the reversible isomerization-deamination of glucosamine 6-phosphate (GlcN6P) to form fructose 6-phosphate (Fru6P) and ammonium ion. This Lachnoclostridium phytofermentans (strain ATCC 700394 / DSM 18823 / ISDg) (Clostridium phytofermentans) protein is Glucosamine-6-phosphate deaminase.